We begin with the raw amino-acid sequence, 336 residues long: Holliday junction branch migration complex subunit RuvB (336 aa).

The tract at residues 4 to 184 is large ATPase domain (RuvB-L); sequence ADRLISAGTT…FGIVQRLEFY (181 aa). Residues Ile-23, Arg-24, Gly-65, Lys-68, Thr-69, Thr-70, 131 to 133, Arg-174, Tyr-184, and Arg-221 each bind ATP; that span reads EDY. Thr-69 provides a ligand contact to Mg(2+). The tract at residues 185–255 is small ATPAse domain (RuvB-S); the sequence is QVPDLQYIVS…IAAQALDMLN (71 aa). The head domain (RuvB-H) stretch occupies residues 258–336; that stretch reads AEGFDYMDRK…HFGITPPEMP (79 aa). The DNA site is built by Arg-294, Arg-313, and Arg-318.

This sequence belongs to the RuvB family. In terms of assembly, homohexamer. Forms an RuvA(8)-RuvB(12)-Holliday junction (HJ) complex. HJ DNA is sandwiched between 2 RuvA tetramers; dsDNA enters through RuvA and exits via RuvB. An RuvB hexamer assembles on each DNA strand where it exits the tetramer. Each RuvB hexamer is contacted by two RuvA subunits (via domain III) on 2 adjacent RuvB subunits; this complex drives branch migration. In the full resolvosome a probable DNA-RuvA(4)-RuvB(12)-RuvC(2) complex forms which resolves the HJ.

It localises to the cytoplasm. It catalyses the reaction ATP + H2O = ADP + phosphate + H(+). Functionally, the RuvA-RuvB-RuvC complex processes Holliday junction (HJ) DNA during genetic recombination and DNA repair, while the RuvA-RuvB complex plays an important role in the rescue of blocked DNA replication forks via replication fork reversal (RFR). RuvA specifically binds to HJ cruciform DNA, conferring on it an open structure. The RuvB hexamer acts as an ATP-dependent pump, pulling dsDNA into and through the RuvAB complex. RuvB forms 2 homohexamers on either side of HJ DNA bound by 1 or 2 RuvA tetramers; 4 subunits per hexamer contact DNA at a time. Coordinated motions by a converter formed by DNA-disengaged RuvB subunits stimulates ATP hydrolysis and nucleotide exchange. Immobilization of the converter enables RuvB to convert the ATP-contained energy into a lever motion, pulling 2 nucleotides of DNA out of the RuvA tetramer per ATP hydrolyzed, thus driving DNA branch migration. The RuvB motors rotate together with the DNA substrate, which together with the progressing nucleotide cycle form the mechanistic basis for DNA recombination by continuous HJ branch migration. Branch migration allows RuvC to scan DNA until it finds its consensus sequence, where it cleaves and resolves cruciform DNA. The sequence is that of Holliday junction branch migration complex subunit RuvB from Escherichia coli (strain ATCC 8739 / DSM 1576 / NBRC 3972 / NCIMB 8545 / WDCM 00012 / Crooks).